The following is a 211-amino-acid chain: Large ribosomal subunit protein uL4 (211 aa).

The disordered stretch occupies residues Gln41–Gly87. Residues Gly60–Gly71 show a composition bias toward basic residues.

This sequence belongs to the universal ribosomal protein uL4 family. Part of the 50S ribosomal subunit.

Functionally, one of the primary rRNA binding proteins, this protein initially binds near the 5'-end of the 23S rRNA. It is important during the early stages of 50S assembly. It makes multiple contacts with different domains of the 23S rRNA in the assembled 50S subunit and ribosome. Its function is as follows. Forms part of the polypeptide exit tunnel. This is Large ribosomal subunit protein uL4 from Parasynechococcus marenigrum (strain WH8102).